Here is a 91-residue protein sequence, read N- to C-terminus: MARMIQCAKLGKEAEGLDFPPLPGELGKRIYENVSKEAWQGWLKQQTMLINENRLNMADPRARQYLMKQTEKYFFGEGADQASGYVPPTEG.

Belongs to the Fe(2+)-trafficking protein family.

Functionally, could be a mediator in iron transactions between iron acquisition and iron-requiring processes, such as synthesis and/or repair of Fe-S clusters in biosynthetic enzymes. The chain is Probable Fe(2+)-trafficking protein from Burkholderia multivorans (strain ATCC 17616 / 249).